Consider the following 1435-residue polypeptide: DNA polymerase III PolC-type (1435 aa).

Residues 420–576 form the Exonuclease domain; sequence YVVFDVETTG…YDTEATGYLL (157 aa).

The protein belongs to the DNA polymerase type-C family. PolC subfamily.

The protein resides in the cytoplasm. The catalysed reaction is DNA(n) + a 2'-deoxyribonucleoside 5'-triphosphate = DNA(n+1) + diphosphate. Its function is as follows. Required for replicative DNA synthesis. This DNA polymerase also exhibits 3' to 5' exonuclease activity. The chain is DNA polymerase III PolC-type from Bacillus cereus (strain ATCC 14579 / DSM 31 / CCUG 7414 / JCM 2152 / NBRC 15305 / NCIMB 9373 / NCTC 2599 / NRRL B-3711).